The chain runs to 146 residues: Large ribosomal subunit protein uL13 (146 aa).

Positions Ala-126–Gly-146 are disordered.

Belongs to the universal ribosomal protein uL13 family. As to quaternary structure, part of the 50S ribosomal subunit.

Functionally, this protein is one of the early assembly proteins of the 50S ribosomal subunit, although it is not seen to bind rRNA by itself. It is important during the early stages of 50S assembly. The sequence is that of Large ribosomal subunit protein uL13 from Roseiflexus castenholzii (strain DSM 13941 / HLO8).